The sequence spans 569 residues: MSTNSSFNRSWAKVILNALLRYGVKHFCIAPGSRSTPLTLEALQLQHTQQAECHSHFDERGLAFFALGMAKATNDPVAIIVTSGTAVANLYPALIEASLTQHKLIVLSADRPPELIGCGVNQAITQPGIFADYPIANIHLPKASTDYNASWLAATIEQACVNQQQQGGVIHINAPFAEPLYETDENEINNTPWLKPLQSWLIKPTAKWLNSQSIQSEVSMHENWDYWRTKRGVIIVGKLPVEQGVGIKAWAETLGWCLLTDIQSCVDASLPYADIWLSNNTVHERLLNADIVIQFGSQIISKRVNKYLADFKGEFWQVDEYQRYLNPFAHRQTRFVAKAHHFLRVHPPLRQKPWLLEPLALSQFCASFIEQQVGGSLNEASLAHHIEQVLATNGNLFIGNSLFVRLVDALCKLPEGYPVYTNRGASGIDGLIATMAGIAKASGQPTVGVVGDISALHDLNSISLLSKINHPSILFVINNSGGAIFDMLPVEARVKEQFYRLSHNYEFSQVAAMFGIEYIRPFTWADLKAKLKLAYGRKSATIVEIKVNDQDGSNLYKSLIKQISQAEIA.

It belongs to the TPP enzyme family. MenD subfamily. In terms of assembly, homodimer. The cofactor is Mg(2+). Requires Mn(2+) as cofactor. Thiamine diphosphate is required as a cofactor.

It catalyses the reaction isochorismate + 2-oxoglutarate + H(+) = 5-enolpyruvoyl-6-hydroxy-2-succinyl-cyclohex-3-ene-1-carboxylate + CO2. It functions in the pathway quinol/quinone metabolism; 1,4-dihydroxy-2-naphthoate biosynthesis; 1,4-dihydroxy-2-naphthoate from chorismate: step 2/7. Its pathway is quinol/quinone metabolism; menaquinone biosynthesis. Its function is as follows. Catalyzes the thiamine diphosphate-dependent decarboxylation of 2-oxoglutarate and the subsequent addition of the resulting succinic semialdehyde-thiamine pyrophosphate anion to isochorismate to yield 2-succinyl-5-enolpyruvyl-6-hydroxy-3-cyclohexene-1-carboxylate (SEPHCHC). In Haemophilus ducreyi (strain 35000HP / ATCC 700724), this protein is 2-succinyl-5-enolpyruvyl-6-hydroxy-3-cyclohexene-1-carboxylate synthase.